The sequence spans 141 residues: Nucleoside diphosphate kinase (141 aa).

Positions 11, 59, 87, 93, 104, and 114 each coordinate ATP. Residue His-117 is the Pros-phosphohistidine intermediate of the active site.

Belongs to the NDK family. In terms of assembly, homotetramer. Requires Mg(2+) as cofactor.

The protein localises to the cytoplasm. The catalysed reaction is a 2'-deoxyribonucleoside 5'-diphosphate + ATP = a 2'-deoxyribonucleoside 5'-triphosphate + ADP. It carries out the reaction a ribonucleoside 5'-diphosphate + ATP = a ribonucleoside 5'-triphosphate + ADP. Its function is as follows. Major role in the synthesis of nucleoside triphosphates other than ATP. The ATP gamma phosphate is transferred to the NDP beta phosphate via a ping-pong mechanism, using a phosphorylated active-site intermediate. The chain is Nucleoside diphosphate kinase from Paraburkholderia xenovorans (strain LB400).